We begin with the raw amino-acid sequence, 187 residues long: uncharacterized protein (187 aa).

The tract at residues 1–95 (MTTMKRSADP…GSTRPSARYG (95 aa)) is disordered. The span at 46-80 (RARRSRGPKRFLGKRNYRRARARKPGKRDRAHSSK) shows a compositional bias: basic residues.

The protein resides in the mitochondrion. This is an uncharacterized protein from Arabidopsis thaliana (Mouse-ear cress).